Here is a 169-residue protein sequence, read N- to C-terminus: ATP synthase subunit b (169 aa).

A helical transmembrane segment spans residues 11–31 (KLPLGNMLFIIISFLVLMVIL).

This sequence belongs to the ATPase B chain family. F-type ATPases have 2 components, F(1) - the catalytic core - and F(0) - the membrane proton channel. F(1) has five subunits: alpha(3), beta(3), gamma(1), delta(1), epsilon(1). F(0) has three main subunits: a(1), b(2) and c(10-14). The alpha and beta chains form an alternating ring which encloses part of the gamma chain. F(1) is attached to F(0) by a central stalk formed by the gamma and epsilon chains, while a peripheral stalk is formed by the delta and b chains.

It is found in the cell membrane. F(1)F(0) ATP synthase produces ATP from ADP in the presence of a proton or sodium gradient. F-type ATPases consist of two structural domains, F(1) containing the extramembraneous catalytic core and F(0) containing the membrane proton channel, linked together by a central stalk and a peripheral stalk. During catalysis, ATP synthesis in the catalytic domain of F(1) is coupled via a rotary mechanism of the central stalk subunits to proton translocation. Functionally, component of the F(0) channel, it forms part of the peripheral stalk, linking F(1) to F(0). This is ATP synthase subunit b from Leuconostoc citreum (strain KM20).